Here is a 239-residue protein sequence, read N- to C-terminus: DNA repair protein RecO (239 aa).

The protein belongs to the RecO family.

In terms of biological role, involved in DNA repair and RecF pathway recombination. In Stenotrophomonas maltophilia (strain K279a), this protein is DNA repair protein RecO.